A 430-amino-acid chain; its full sequence is Ribosomal protein uS12 methylthiotransferase RimO (430 aa).

Residues 2 to 118 (AKIFTISLGC…IDNVIKRPKH (117 aa)) form the MTTase N-terminal domain. [4Fe-4S] cluster contacts are provided by Cys-11, Cys-47, Cys-81, Cys-150, Cys-154, and Cys-157. One can recognise a Radical SAM core domain in the interval 136–368 (LTAPHSAYLK…AQSRVIDSIN (233 aa)). The TRAM domain occupies 369–430 (RKLKGKTVKV…KGYNRTGKII (62 aa)).

The protein belongs to the methylthiotransferase family. RimO subfamily. Requires [4Fe-4S] cluster as cofactor.

The protein localises to the cytoplasm. The catalysed reaction is L-aspartate(89)-[ribosomal protein uS12]-hydrogen + (sulfur carrier)-SH + AH2 + 2 S-adenosyl-L-methionine = 3-methylsulfanyl-L-aspartate(89)-[ribosomal protein uS12]-hydrogen + (sulfur carrier)-H + 5'-deoxyadenosine + L-methionine + A + S-adenosyl-L-homocysteine + 2 H(+). Functionally, catalyzes the methylthiolation of an aspartic acid residue of ribosomal protein uS12. The chain is Ribosomal protein uS12 methylthiotransferase RimO from Elusimicrobium minutum (strain Pei191).